We begin with the raw amino-acid sequence, 1146 residues long: Elicitor of plant defense protein 1 (1146 aa).

Disordered stretches follow at residues 25–75 (DPLP…RLSN) and 156–226 (ARPP…PRQG). The segment covering 164–177 (RAERIKAEDSDQSG) has biased composition (basic and acidic residues). The uDENN domain occupies 246-500 (PLNTDPNMHP…NLCTEAFSPL (255 aa)). The region spanning 522-656 (VNEIPGSRTI…HRRKLHALLQ (135 aa)) is the cDENN domain. Residues 658 to 1016 (AAPAKLRYGV…ERETKPGTTA (359 aa)) enclose the dDENN domain. A disordered region spans residues 730-806 (LHSKVDPNKP…RRSSSFGVDK (77 aa)). The segment covering 732–743 (SKVDPNKPDRPG) has biased composition (basic and acidic residues). Over residues 744–760 (TSKSTRTSPPSSVSPVS) the composition is skewed to low complexity. A compositionally biased stretch (polar residues) spans 769-783 (TPVSRSDSGFALTST). Residues 784–797 (LREKRSRNFDEKTR) are compositionally biased toward basic and acidic residues. A Phorbol-ester/DAG-type zinc finger spans residues 883 to 931 (GHCFNWEEGALSSSCSVCDDRAEGDGIYKCSGCSAFAHGRCLGCVSLAC). The tract at residues 1121-1146 (PRPEQRGTRGLVRKQVPSMLGTSPTN) is disordered.

Belongs to the EPD1 elicitor family. Interacts with host cotton EIR5A (AC A0A5J5T2N2) and EIR5D (AC A0A5J5NT52) and host N.benthamiana EIR (AC P0DXJ0).

Its subcellular location is the secreted. It localises to the host cell. In terms of biological role, acts as an elicitor that triggers defense responses in both Nicotiana benthamiana and cotton plants. Triggers the accumulation of reactive oxygen species (ROS) and the activation of cell death in cotton plants. Induces significantly enhanced resistance of Nicotiana benthamiana to both the broad-host-range filamentous pathogen Botrytis cinerea and the semibiotrophic pathogen Phytophthora capsici. Stimulates the expression of EIR5A (AC A0A5J5T2N2) and EIR5D (AC A0A5J5NT52) in cotton plants and recognition of EPD1 potentiates EIRs to enhance cotton PAMP-triggered immunity (PTI). In Verticillium dahliae (strain VdLs.17 / ATCC MYA-4575 / FGSC 10137) (Verticillium wilt), this protein is Elicitor of plant defense protein 1.